Here is a 404-residue protein sequence, read N- to C-terminus: uncharacterized protein (404 aa).

6 helical membrane passes run 37–57, 92–112, 122–142, 188–208, 230–250, and 272–292; these read LLIL…FVQF, IYNV…FVLG, LLTL…SYIP, MFYA…ILII, IGGI…TIGT, and AFFL…LGIF.

It localises to the cell membrane. This is an uncharacterized protein from Mycoplasma pneumoniae (strain ATCC 29342 / M129 / Subtype 1) (Mycoplasmoides pneumoniae).